A 180-amino-acid polypeptide reads, in one-letter code: Large ribosomal subunit protein uL5 (180 aa).

Belongs to the universal ribosomal protein uL5 family. In terms of assembly, part of the 50S ribosomal subunit; part of the 5S rRNA/L5/L18/L25 subcomplex. Contacts the 5S rRNA and the P site tRNA. Forms a bridge to the 30S subunit in the 70S ribosome.

This is one of the proteins that bind and probably mediate the attachment of the 5S RNA into the large ribosomal subunit, where it forms part of the central protuberance. In the 70S ribosome it contacts protein S13 of the 30S subunit (bridge B1b), connecting the 2 subunits; this bridge is implicated in subunit movement. Contacts the P site tRNA; the 5S rRNA and some of its associated proteins might help stabilize positioning of ribosome-bound tRNAs. In Rippkaea orientalis (strain PCC 8801 / RF-1) (Cyanothece sp. (strain PCC 8801)), this protein is Large ribosomal subunit protein uL5.